Here is a 576-residue protein sequence, read N- to C-terminus: Arginine--tRNA ligase (576 aa).

The 'HIGH' region signature appears at 122–132 (PNVAKEMHVGH).

Belongs to the class-I aminoacyl-tRNA synthetase family. As to quaternary structure, monomer.

It localises to the cytoplasm. It catalyses the reaction tRNA(Arg) + L-arginine + ATP = L-arginyl-tRNA(Arg) + AMP + diphosphate. This is Arginine--tRNA ligase from Thermobifida fusca (strain YX).